The following is a 37-amino-acid chain: MSDIN-like toxin proprotein 5 (37 aa).

The propeptide occupies 1-10 (MSDINATRLP). A cross-link (cyclopeptide (Leu-Pro)) is located at residues 11–20 (LFFPPDFRPP). Residues 21 to 37 (CVGDADNFTLTRGENLC) constitute a propeptide that is removed on maturation.

It belongs to the MSDIN fungal toxin family. Processed by the macrocyclase-peptidase enzyme POPB to yield a toxic cyclic decapeptide. POPB first removes 10 residues from the N-terminus. Conformational trapping of the remaining peptide forces the enzyme to release this intermediate rather than proceed to macrocyclization. The enzyme rebinds the remaining peptide in a different conformation and catalyzes macrocyclization of the N-terminal 10 residues. As to expression, expressed in basidiocarps.

Probable toxin that belongs to the MSDIN-like toxin family responsible for a large number of food poisoning cases and deaths. This is MSDIN-like toxin proprotein 5 from Amanita exitialis (Guangzhou destroying angel).